Here is a 252-residue protein sequence, read N- to C-terminus: uncharacterized protein (252 aa).

S195 and S209 each carry phosphoserine.

Testis-specific. Highly expressed in spermatocytes (at protein level).

In terms of biological role, essential for normal spermatogenesis and male fertility. This is an uncharacterized protein from Mus musculus (Mouse).